The primary structure comprises 488 residues: Alpha-ketoglutaric semialdehyde dehydrogenase (488 aa).

NAD(+)-binding positions include lysine 180 and 233–238; that span reads GSNQVG. The Proton acceptor role is filled by glutamate 255. Cysteine 289 functions as the Nucleophile in the catalytic mechanism. NAD(+) contacts are provided by glutamine 336 and glutamate 390.

Belongs to the aldehyde dehydrogenase family. As to quaternary structure, homotetramer.

It catalyses the reaction 2,5-dioxopentanoate + NADP(+) + H2O = 2-oxoglutarate + NADPH + 2 H(+). It carries out the reaction 2,5-dioxopentanoate + NAD(+) + H2O = 2-oxoglutarate + NADH + 2 H(+). Catalyzes the NAD(P)(+)-dependent oxidation of alpha-ketoglutaric semialdehyde (alphaKGSA) to alpha-ketoglutarate. Prefers NADP(+) to NAD(+) as a cosubstrate. In vitro, can also use various aldehydes. The chain is Alpha-ketoglutaric semialdehyde dehydrogenase from Bacillus subtilis (strain 168).